The following is a 426-amino-acid chain: Trigger factor (426 aa).

The region spanning 165–239 (GDVYKLNEAG…ISEIKRLELP (75 aa)) is the PPIase FKBP-type domain.

It belongs to the FKBP-type PPIase family. Tig subfamily.

It is found in the cytoplasm. It catalyses the reaction [protein]-peptidylproline (omega=180) = [protein]-peptidylproline (omega=0). In terms of biological role, involved in protein export. Acts as a chaperone by maintaining the newly synthesized protein in an open conformation. Functions as a peptidyl-prolyl cis-trans isomerase. The protein is Trigger factor of Pelodictyon phaeoclathratiforme (strain DSM 5477 / BU-1).